Here is a 169-residue protein sequence, read N- to C-terminus: ATP synthase subunit b (169 aa).

The helical transmembrane segment at 11-31 (IPSFIAQVVNFGLLLGLLYLF) threads the bilayer.

The protein belongs to the ATPase B chain family. In terms of assembly, F-type ATPases have 2 components, F(1) - the catalytic core - and F(0) - the membrane proton channel. F(1) has five subunits: alpha(3), beta(3), gamma(1), delta(1), epsilon(1). F(0) has three main subunits: a(1), b(2) and c(10-14). The alpha and beta chains form an alternating ring which encloses part of the gamma chain. F(1) is attached to F(0) by a central stalk formed by the gamma and epsilon chains, while a peripheral stalk is formed by the delta and b chains.

Its subcellular location is the cell membrane. Its function is as follows. F(1)F(0) ATP synthase produces ATP from ADP in the presence of a proton or sodium gradient. F-type ATPases consist of two structural domains, F(1) containing the extramembraneous catalytic core and F(0) containing the membrane proton channel, linked together by a central stalk and a peripheral stalk. During catalysis, ATP synthesis in the catalytic domain of F(1) is coupled via a rotary mechanism of the central stalk subunits to proton translocation. In terms of biological role, component of the F(0) channel, it forms part of the peripheral stalk, linking F(1) to F(0). The protein is ATP synthase subunit b of Dehalococcoides mccartyi (strain ATCC BAA-2266 / KCTC 15142 / 195) (Dehalococcoides ethenogenes (strain 195)).